We begin with the raw amino-acid sequence, 111 residues long: UPF0060 membrane protein XAC3064 (111 aa).

The next 4 helical transmembrane spans lie at 8–28, 32–52, 64–84, and 91–111; these read LLLF…PYLW, GGSV…VWLL, AAYG…VDGV, and LLGA…PRSA.

This sequence belongs to the UPF0060 family.

It is found in the cell inner membrane. The chain is UPF0060 membrane protein XAC3064 from Xanthomonas axonopodis pv. citri (strain 306).